The following is a 353-amino-acid chain: Photosystem II D2 protein (353 aa).

Position 2 is an N-acetylthreonine (Thr-2). Thr-2 bears the Phosphothreonine mark. Residues 41–61 (CAYFALGGWFTGTTFVTSWYT) form a helical membrane-spanning segment. His-118 lines the chlorophyll a pocket. Residues 125 to 141 (GFMLRQFELARSVQLRP) traverse the membrane as a helical segment. The pheophytin a site is built by Gln-130 and Asn-143. The chain crosses the membrane as a helical span at residues 153 to 166 (VFVSVFLIYPLGQS). His-198 contributes to the chlorophyll a binding site. Residues 208–228 (AALLCAIHGATVENTLFEDGD) traverse the membrane as a helical segment. The a plastoquinone site is built by His-215 and Phe-262. A Fe cation-binding site is contributed by His-215. His-269 provides a ligand contact to Fe cation. Residues 279-295 (GLWMSAIGVVGLALNLR) form a helical membrane-spanning segment.

The protein belongs to the reaction center PufL/M/PsbA/D family. In terms of assembly, PSII is composed of 1 copy each of membrane proteins PsbA, PsbB, PsbC, PsbD, PsbE, PsbF, PsbH, PsbI, PsbJ, PsbK, PsbL, PsbM, PsbT, PsbX, PsbY, PsbZ, Psb30/Ycf12, at least 3 peripheral proteins of the oxygen-evolving complex and a large number of cofactors. It forms dimeric complexes. The D1/D2 heterodimer binds P680, chlorophylls that are the primary electron donor of PSII, and subsequent electron acceptors. It shares a non-heme iron and each subunit binds pheophytin, quinone, additional chlorophylls, carotenoids and lipids. There is also a Cl(-1) ion associated with D1 and D2, which is required for oxygen evolution. The PSII complex binds additional chlorophylls, carotenoids and specific lipids. is required as a cofactor.

Its subcellular location is the plastid. It is found in the chloroplast thylakoid membrane. The catalysed reaction is 2 a plastoquinone + 4 hnu + 2 H2O = 2 a plastoquinol + O2. Its function is as follows. Photosystem II (PSII) is a light-driven water:plastoquinone oxidoreductase that uses light energy to abstract electrons from H(2)O, generating O(2) and a proton gradient subsequently used for ATP formation. It consists of a core antenna complex that captures photons, and an electron transfer chain that converts photonic excitation into a charge separation. The D1/D2 (PsbA/PsbD) reaction center heterodimer binds P680, the primary electron donor of PSII as well as several subsequent electron acceptors. D2 is needed for assembly of a stable PSII complex. This is Photosystem II D2 protein from Pinus thunbergii (Japanese black pine).